The chain runs to 594 residues: Actin-histidine N-methyltransferase (594 aa).

The interval 1–23 is disordered; the sequence is MGKKSRVKTQKSGTGATASVSPK. Residues 10 to 23 show a composition bias toward polar residues; sequence QKSGTGATASVSPK. S-adenosyl-L-methionine is bound by residues Arg-75, 104–106, Arg-254, 275–279, and 325–327; these read EGF, DMCNH, and SGF. The SET domain occupies 94 to 314; the sequence is EGFEMVSFKE…AGEQIYIFYG (221 aa). Residues 553-594 form a disordered region; sequence INGENSIPNGTRLEKEDLNQEQSKRVTEDAKEPSDSTEEVKE. Basic and acidic residues predominate over residues 564–594; that stretch reads RLEKEDLNQEQSKRVTEDAKEPSDSTEEVKE.

The protein belongs to the class V-like SAM-binding methyltransferase superfamily. SETD3 actin-histidine methyltransferase family. As to quaternary structure, interacts with MYOD1. Post-translationally, phosphorylated by GSK3B, which is required for recognition by the SCF(FBXW7) complex and subsequent degradation. In terms of processing, ubiquitinated by the SCF(FBXW7) complex following phosphorylation by GSK3B, leading to its degradation by the proteasome.

The protein localises to the cytoplasm. It is found in the nucleus. The enzyme catalyses L-histidyl-[protein] + S-adenosyl-L-methionine = N(tele)-methyl-L-histidyl-[protein] + S-adenosyl-L-homocysteine + H(+). Functionally, protein-histidine N-methyltransferase that specifically mediates 3-methylhistidine (tele-methylhistidine) methylation of actin at 'His-73'. Histidine methylation of actin is required for smooth muscle contraction of the laboring uterus during delivery. Does not have protein-lysine N-methyltransferase activity and probably only catalyzes histidine methylation of actin. The protein is Actin-histidine N-methyltransferase of Rhinolophus ferrumequinum (Greater horseshoe bat).